A 195-amino-acid polypeptide reads, in one-letter code: HTH-type transcriptional regulator BetI (195 aa).

Positions 8-68 (PIRRQQLIEA…ATMRYLISHL (61 aa)) constitute an HTH tetR-type domain. Positions 31–50 (SIVQIARRAGVSNGIISHYF) form a DNA-binding region, H-T-H motif.

It participates in amine and polyamine biosynthesis; betaine biosynthesis via choline pathway [regulation]. In terms of biological role, repressor involved in the biosynthesis of the osmoprotectant glycine betaine. It represses transcription of the choline transporter BetT and the genes of BetAB involved in the synthesis of glycine betaine. This Pectobacterium carotovorum subsp. carotovorum (strain PC1) protein is HTH-type transcriptional regulator BetI.